Consider the following 353-residue polypeptide: UPF0283 membrane protein YcjF (353 aa).

A compositionally biased stretch (basic and acidic residues) spans 1–19 (MSEPLKPRIDFAEPLKEEP). The segment at 1-35 (MSEPLKPRIDFAEPLKEEPTSAFKAQQTFSEAESR) is disordered. Topologically, residues 1–69 (MSEPLKPRID…LRPKRSLWRK (69 aa)) are periplasmic. A helical transmembrane segment spans residues 70-90 (MVMGGLALFGASVVGQGVQWT). Topologically, residues 91 to 99 (MNAWQTQDW) are cytoplasmic. A helical membrane pass occupies residues 100–120 (VALGGCAAGALIVGAGVGSVV). Topologically, residues 121–212 (TEWRRLWRLR…ARREISRFAA (92 aa)) are periplasmic. A helical membrane pass occupies residues 213–233 (ESTLMIAVSPLALVDMAFIAW). The Cytoplasmic segment spans residues 234 to 353 (RNLRLINRIA…LQKSKSSPEK (120 aa)).

This sequence belongs to the UPF0283 family.

Its subcellular location is the cell inner membrane. In Salmonella typhimurium (strain LT2 / SGSC1412 / ATCC 700720), this protein is UPF0283 membrane protein YcjF (ycjF).